Consider the following 317-residue polypeptide: Cytochrome c biogenesis protein CcsA (317 aa).

A run of 8 helical transmembrane segments spans residues Ile-9 to Phe-29, Thr-46 to Ser-63, Leu-71 to Phe-91, Leu-98 to Leu-118, Met-143 to Ile-163, Ile-225 to Asn-245, Glu-258 to His-273, and Ala-286 to Leu-306.

It belongs to the CcmF/CycK/Ccl1/NrfE/CcsA family. As to quaternary structure, may interact with Ccs1.

It is found in the plastid. Its subcellular location is the chloroplast thylakoid membrane. Its function is as follows. Required during biogenesis of c-type cytochromes (cytochrome c6 and cytochrome f) at the step of heme attachment. The sequence is that of Cytochrome c biogenesis protein CcsA from Citrus sinensis (Sweet orange).